A 360-amino-acid polypeptide reads, in one-letter code: Phospho-N-acetylmuramoyl-pentapeptide-transferase (360 aa).

A run of 10 helical transmembrane segments spans residues 21-41, 73-93, 94-114, 132-152, 168-188, 199-219, 236-256, 263-283, 288-308, and 338-358; these read YLSF…LWMG, TMGG…WANL, SNPY…VGFV, WKYF…YAYG, VMPQ…VGTS, GLAI…AWAT, ASEL…FLWF, VFMG…IAVL, LVLV…ILQV, and VIVR…ATLK.

The protein belongs to the glycosyltransferase 4 family. MraY subfamily. Mg(2+) serves as cofactor.

The protein localises to the cell inner membrane. It carries out the reaction UDP-N-acetyl-alpha-D-muramoyl-L-alanyl-gamma-D-glutamyl-meso-2,6-diaminopimeloyl-D-alanyl-D-alanine + di-trans,octa-cis-undecaprenyl phosphate = di-trans,octa-cis-undecaprenyl diphospho-N-acetyl-alpha-D-muramoyl-L-alanyl-D-glutamyl-meso-2,6-diaminopimeloyl-D-alanyl-D-alanine + UMP. It functions in the pathway cell wall biogenesis; peptidoglycan biosynthesis. Its function is as follows. Catalyzes the initial step of the lipid cycle reactions in the biosynthesis of the cell wall peptidoglycan: transfers peptidoglycan precursor phospho-MurNAc-pentapeptide from UDP-MurNAc-pentapeptide onto the lipid carrier undecaprenyl phosphate, yielding undecaprenyl-pyrophosphoryl-MurNAc-pentapeptide, known as lipid I. The chain is Phospho-N-acetylmuramoyl-pentapeptide-transferase from Vibrio vulnificus (strain CMCP6).